We begin with the raw amino-acid sequence, 506 residues long: Maturase K (506 aa).

It belongs to the intron maturase 2 family. MatK subfamily.

It is found in the plastid. Its subcellular location is the chloroplast. Functionally, usually encoded in the trnK tRNA gene intron. Probably assists in splicing its own and other chloroplast group II introns. The polypeptide is Maturase K (Phyllodoce empetriformis (Pink mountainheath)).